Consider the following 341-residue polypeptide: Retinol dehydrogenase 10-B (341 aa).

The chain crosses the membrane as a helical; Signal-anchor span at residues 3–23 (IVLEFFLVTFRVLWAFVLAAA). 40 to 64 (LITGAGSGLGRLFALEFARRRAQLV) lines the NADP(+) pocket. S197 is a binding site for substrate. Y210 acts as the Proton acceptor in catalysis.

This sequence belongs to the short-chain dehydrogenases/reductases (SDR) family.

It localises to the microsome membrane. The protein localises to the endoplasmic reticulum membrane. It carries out the reaction all-trans-retinol + NADP(+) = all-trans-retinal + NADPH + H(+). It functions in the pathway cofactor metabolism; retinol metabolism. Functionally, retinol dehydrogenase with a clear preference for NADP. Converts all-trans-retinol to all-trans-retinal. Has no detectable activity towards 11-cis-retinol, 9-cis-retinol and 13-cis-retinol. The chain is Retinol dehydrogenase 10-B (rdh10-b) from Xenopus laevis (African clawed frog).